A 372-amino-acid chain; its full sequence is Transcription factor YY2 (372 aa).

The tract at residues 32-102 (MEDIPTESVQ…SDNQLGNDLE (71 aa)) is mediates transcriptional activation. Residues 126–136 (SAASTSTSTQS) are compositionally biased toward low complexity. Disordered regions lie at residues 126-172 (SAAS…WEQK) and 186-210 (TMWS…PPDY). Basic residues predominate over residues 137–146 (RSKKPSKKPS). 2 stretches are compositionally biased toward polar residues: residues 154-165 (EANPAGSSSSLG) and 186-196 (TMWSPNDNNDQ). The tract at residues 237–372 (EFTKVKPKRS…LTHVKTKNNP (136 aa)) is mediates transcriptional repression. C2H2-type zinc fingers lie at residues 254–278 (VPCS…LHIH), 283–305 (HVCA…QLVH), 311–335 (FQCT…LRIH), and 341–365 (FVCP…ILTH).

Belongs to the YY transcription factor family. In terms of tissue distribution, expressed in kidney, liver, spleen and testis but not in colon.

The protein localises to the nucleus. Its function is as follows. Functions as a multifunctional transcription factor that may exhibit positive and negative control on a large number of genes. May antagonize YY1 and function in development and differentiation. The chain is Transcription factor YY2 (YY2) from Homo sapiens (Human).